The primary structure comprises 280 residues: NAD(+) hydrolase TirS (280 aa).

Positions 22-94 (MNKLPDEIDR…KINLQKEQSR (73 aa)) form a coiled coil. In terms of domain architecture, TIR spans 141–275 (IEYDVFLSHS…EIVEKIYQVI (135 aa)). Residues 150-151 (SS) and glutamate 180 contribute to the NAD(+) site. Glutamate 216 is a catalytic residue.

It localises to the secreted. The enzyme catalyses NAD(+) + H2O = ADP-D-ribose + nicotinamide + H(+). It catalyses the reaction NADP(+) + H2O = ADP-D-ribose 2'-phosphate + nicotinamide + H(+). Functionally, virulence factor that suppresses host Toll-like receptor 2 (TLR2)-mediated NF-kappa-B signaling upon infection. NAD(+) hydrolase (NADase) that catalyzes cleavage of NAD(+) into ADP-D-ribose (ADPR) and nicotinamide. Also able to hydrolyze NADP(+), but not other NAD(+)-related molecules. Able to reduce NAD(+) levels in host cells. The protein is NAD(+) hydrolase TirS of Staphylococcus aureus (strain MSSA476).